The chain runs to 856 residues: Translation initiation factor IF-2 (856 aa).

A tr-type G domain is found at 356–526; sequence PRAPVVTVMG…LLIADLLELK (171 aa). The interval 365 to 372 is G1; sequence GHVDHGKT. Residue 365–372 participates in GTP binding; that stretch reads GHVDHGKT. A G2 region spans residues 390 to 394; sequence GITQH. A G3 region spans residues 412-415; it reads DTPG. Residues 412 to 416 and 466 to 469 each bind GTP; these read DTPGH and NKID. The tract at residues 466 to 469 is G4; that stretch reads NKID. The segment at 502 to 504 is G5; sequence SAK.

It belongs to the TRAFAC class translation factor GTPase superfamily. Classic translation factor GTPase family. IF-2 subfamily.

The protein localises to the cytoplasm. Its function is as follows. One of the essential components for the initiation of protein synthesis. Protects formylmethionyl-tRNA from spontaneous hydrolysis and promotes its binding to the 30S ribosomal subunits. Also involved in the hydrolysis of GTP during the formation of the 70S ribosomal complex. This Ehrlichia ruminantium (strain Welgevonden) protein is Translation initiation factor IF-2.